The sequence spans 577 residues: Protein GPR108 (577 aa).

The first 34 residues, 1-34, serve as a signal peptide directing secretion; the sequence is MAVSERRGLSGESPAQCRWEYLSLLVLMLSGCSG. 2 N-linked (GlcNAc...) asparagine glycosylation sites follow: Asn-59 and Asn-111. Residues 144–224 are disordered; that stretch reads LLPEAPSQSG…TRGPSGKEKD (81 aa). 2 N-linked (GlcNAc...) asparagine glycosylation sites follow: Asn-233 and Asn-237. A run of 7 helical transmembrane segments spans residues 296–316, 325–345, 369–389, 400–420, 434–454, 482–502, and 506–526; these read LYLI…SVLC, IHWL…FHSI, LLKG…WAFV, IFGI…VIES, ILFL…VWSI, VMVI…RVAV, and WQWL…VLTG.

Belongs to the LU7TM family.

It is found in the golgi apparatus. It localises to the cis-Golgi network membrane. The protein resides in the trans-Golgi network membrane. The protein localises to the golgi apparatus membrane. May play a role in intracellular immune modulation by activating NF-kappaB response and attenuating Toll-like-receptor response. The sequence is that of Protein GPR108 (Gpr108) from Rattus norvegicus (Rat).